A 132-amino-acid chain; its full sequence is Small ribosomal subunit protein uS8 (132 aa).

Belongs to the universal ribosomal protein uS8 family. Part of the 30S ribosomal subunit. Contacts proteins S5 and S12.

One of the primary rRNA binding proteins, it binds directly to 16S rRNA central domain where it helps coordinate assembly of the platform of the 30S subunit. This chain is Small ribosomal subunit protein uS8, found in Staphylococcus carnosus (strain TM300).